Reading from the N-terminus, the 587-residue chain is Glutaconyl-CoA decarboxylase subunit alpha (587 aa).

Residues 31–298 enclose the CoA carboxyltransferase N-terminal domain; it reads LKKIEEEIHQ…YDPEFFRVDD (268 aa). The interval 31–558 is carboxyltransferase; it reads LKKIEEEIHQ…RGYVEAFTEA (528 aa). In terms of domain architecture, CoA carboxyltransferase C-terminal spans 295–558; that stretch reads RVDDPKAPAF…RGYVEAFTEA (264 aa).

As to quaternary structure, heterooctamer consisting of two alpha, two beta, two gamma and two delta subunits.

The enzyme catalyses (2E)-glutaconyl-CoA + Na(+)(in) + H(+) = (2E)-butenoyl-CoA + Na(+)(out) + CO2. The protein operates within amino-acid degradation; L-glutamate degradation via hydroxyglutarate pathway; crotonoyl-CoA from L-glutamate: step 5/5. In terms of biological role, decarboxylase subunit of the primary sodium pump glutaconyl-CoA decarboxylase (GCD). This Acidaminococcus fermentans (strain ATCC 25085 / DSM 20731 / CCUG 9996 / CIP 106432 / VR4) protein is Glutaconyl-CoA decarboxylase subunit alpha (gcdA).